The following is an 83-amino-acid chain: Small ribosomal subunit protein bS16 (83 aa).

Belongs to the bacterial ribosomal protein bS16 family.

This Chromobacterium violaceum (strain ATCC 12472 / DSM 30191 / JCM 1249 / CCUG 213 / NBRC 12614 / NCIMB 9131 / NCTC 9757 / MK) protein is Small ribosomal subunit protein bS16.